The chain runs to 354 residues: Rhodopsin (354 aa).

Topologically, residues 1–36 (MNGTEGPDFYVPMVNTTGIVRSPYDYPQYYLVNPAA) are extracellular. N-linked (GlcNAc...) asparagine glycosylation is found at Asn-2 and Asn-15. The helical transmembrane segment at 37–61 (FSMLAAYMFFLILVGFPVNFLTLYV) threads the bilayer. The Cytoplasmic portion of the chain corresponds to 62 to 73 (TMEHKKLRTPLN). The chain crosses the membrane as a helical span at residues 74–96 (YILLNLAVANLFMVIGGFTTTMY). Residues 97 to 110 (TSMHGYFVLGRTGC) are Extracellular-facing. An intrachain disulfide couples Cys-110 to Cys-187. Residues 111–133 (NLEGFFATLGGEIALWSLVVLAV) form a helical membrane-spanning segment. Positions 134–136 (ERW) match the 'Ionic lock' involved in activated form stabilization motif. At 134–152 (ERWVVVCKPISNFRFGENH) the chain is on the cytoplasmic side. Residues 153 to 173 (AVMGVSFTWLMACACSVPPLF) form a helical membrane-spanning segment. At 174-202 (GWSRYIPEGMQCSCGIDYYTRAPGYNNES) the chain is on the extracellular side. A helical transmembrane segment spans residues 203–224 (FVIYMFVCHFSIPLTIIFFCYG). Topologically, residues 225 to 252 (RLLCAVKDAAAAQQESETTQRAEREVSR) are cytoplasmic. The chain crosses the membrane as a helical span at residues 253–274 (MVVIMVIGFLICWLPYASVAWF). Residues 275–286 (IFTHQGSEFGPV) are Extracellular-facing. A helical transmembrane segment spans residues 287 to 308 (FMTIPAFFAKSSAIYNPMIYIC). At Lys-296 the chain carries N6-(retinylidene)lysine. At 309–354 (MNKQFRHCMITTLCCGKNPFEEEEGASTTASKTEASSVSSSHVSPA) the chain is on the cytoplasmic side. 2 S-palmitoyl cysteine lipidation sites follow: Cys-322 and Cys-323. The interval 333–354 (GASTTASKTEASSVSSSHVSPA) is disordered. The span at 334 to 354 (ASTTASKTEASSVSSSHVSPA) shows a compositional bias: low complexity.

This sequence belongs to the G-protein coupled receptor 1 family. Opsin subfamily. In terms of processing, phosphorylated on some or all of the serine and threonine residues present in the C-terminal region. Contains one covalently linked retinal chromophore.

The protein localises to the membrane. It is found in the cell projection. The protein resides in the cilium. Its subcellular location is the photoreceptor outer segment. Functionally, photoreceptor required for image-forming vision at low light intensity. While most salt water fish species use retinal as chromophore, most freshwater fish use 3-dehydroretinal, or a mixture of retinal and 3-dehydroretinal. Light-induced isomerization of 11-cis to all-trans retinal triggers a conformational change that activates signaling via G-proteins. Subsequent receptor phosphorylation mediates displacement of the bound G-protein alpha subunit by arrestin and terminates signaling. In Zeus faber (John Dory), this protein is Rhodopsin (rho).